A 146-amino-acid polypeptide reads, in one-letter code: MRRTLKAVGAAAAAATCVLAATAGTAQAEAPKAESLYAPSALVLTVGQGENAESAAVERAVTLTCAPRPGGTHPSAAAACAELAKVNGQFARLVGASSDAICTKEWRPVTVSVVGAWNGKHVNWTSTFANQCTMKAGLGEGAALTF.

The N-terminal stretch at Met-1–Ala-28 is a signal peptide. 2 disulfides stabilise this stretch: Cys-65–Cys-80 and Cys-102–Cys-132.

Belongs to the protease inhibitor I16 (SSI) family. As to quaternary structure, homodimer.

It localises to the secreted. Functionally, strong inhibitor of bacterial serine proteases such as subtilisin. The polypeptide is Subtilisin inhibitor (vsi) (Streptomyces violaceus (Streptomyces venezuelae)).